We begin with the raw amino-acid sequence, 762 residues long: MAIQTSNLGYPRIGLQREWKKTLEAFWSNKINEEQFLTTMKEIRLQHVKVQQEKGIELIPIGDFTYYDHVLDTAYMLGFIPSRFSEFTSYLDVYFAMARGSKDHVASEMTKWFNTNYHYIVPEYEEGLQISLKDNRPLRLYEEAKQELGVDGKPVILGPYTFLKLAKGYTQEQFATILKQLVAPYVQLLSELHAAGAQIIQVDEPIFASLTKEEVQQAKEIYEAIRKEVPNATLLLQTYFDSVEENYEEFITFPVSSIGLDFVHGKEGNLNAISKYGFPADKTLAVGCIDGRNIWRADLDEVLTLFTTLQKQVQTKDLIVQPSCSLLHTPIDKTEETHLSTELFDALAFANQKLEELVLIHSALTQGTESISNELETYRNVHHTIRSSAARNREDVKAARTALKEEDFSRPLPFEKRYELQQVALKLPLLPTTTIGSFPQTTEVRQTRKEWRNGIISNEQYEQFIEKETEKWIRYQEEIGLDVLVHGEFERTDMVEYFSERLAGFSFTKNGWVQSYGSRCVKPPVIYGDVAFINGMTIKETVYAQSLTEKVVKGMLTGPVTILNWSFVRNDIPRKEVSYQIALALRHEIELLESSGIRVIQVDEPALREGMPLKEKDWDAYITWAVQSFLLATSSVANETQIHTHMCYSNFEDIVDAIRALDADVISIETSRSHGEFIDTLKHTTYEKGIGLGVYDIHSPRVPSKDEMYKIVEQSLQVCDPKYFWINPDCGLKTRRTEEVIPALEHMVQAAKDARSLLKTNA.

5-methyltetrahydropteroyltri-L-glutamate-binding positions include 17–20 and Lys-111; that span reads REWK. L-homocysteine-binding positions include 435 to 437 and Glu-488; that span reads IGS. L-methionine contacts are provided by residues 435–437 and Glu-488; that span reads IGS. Residues 519-520 and Trp-565 contribute to the 5-methyltetrahydropteroyltri-L-glutamate site; that span reads RC. Residue Asp-603 participates in L-homocysteine binding. Asp-603 is an L-methionine binding site. Glu-609 contributes to the 5-methyltetrahydropteroyltri-L-glutamate binding site. Zn(2+)-binding residues include His-645, Cys-647, and Glu-669. His-698 (proton donor) is an active-site residue. Cys-730 contacts Zn(2+).

It belongs to the vitamin-B12 independent methionine synthase family. The cofactor is Zn(2+).

It carries out the reaction 5-methyltetrahydropteroyltri-L-glutamate + L-homocysteine = tetrahydropteroyltri-L-glutamate + L-methionine. The protein operates within amino-acid biosynthesis; L-methionine biosynthesis via de novo pathway; L-methionine from L-homocysteine (MetE route): step 1/1. Its function is as follows. Catalyzes the transfer of a methyl group from 5-methyltetrahydrofolate to homocysteine resulting in methionine formation. The sequence is that of 5-methyltetrahydropteroyltriglutamate--homocysteine methyltransferase from Bacillus thuringiensis subsp. konkukian (strain 97-27).